A 155-amino-acid chain; its full sequence is uncharacterized protein (155 aa).

Transmembrane regions (helical) follow at residues 2-24 (TFLF…PPIF), 62-84 (AVVN…YLVL), 97-116 (VFLI…FLVV), and 131-148 (VVLL…KVFN).

It localises to the cell membrane. This is an uncharacterized protein from Aquifex aeolicus (strain VF5).